A 602-amino-acid polypeptide reads, in one-letter code: ATP-dependent zinc metalloprotease FtsH 3 (602 aa).

Residues 1-18 lie on the Cytoplasmic side of the membrane; the sequence is MNSWFLQVSKRLGPAGRR. Residues 19-39 form a helical membrane-spanning segment; the sequence is LWLLGFMGVVLAVTLGLALRA. Topologically, residues 40-117 are periplasmic; it reads ARESATQRTA…DFASREDPSR (78 aa). The chain crosses the membrane as a helical span at residues 118–138; the sequence is AASAVLPVVVLAAVGFALFTV. Residues 139-602 are Cytoplasmic-facing; it reads SRRRSPKVFS…RRPRPEDQAA (464 aa). Position 202 to 209 (202 to 209) interacts with ATP; the sequence is GEPGTGKT. Residue H425 coordinates Zn(2+). Residue E426 is part of the active site. Zn(2+) contacts are provided by H429 and D501.

In the central section; belongs to the AAA ATPase family. It in the C-terminal section; belongs to the peptidase M41 family. In terms of assembly, homohexamer. The cofactor is Zn(2+).

The protein localises to the cell inner membrane. Acts as a processive, ATP-dependent zinc metallopeptidase for both cytoplasmic and membrane proteins. Plays a role in the quality control of integral membrane proteins. In Sorangium cellulosum (strain So ce56) (Polyangium cellulosum (strain So ce56)), this protein is ATP-dependent zinc metalloprotease FtsH 3.